Here is a 562-residue protein sequence, read N- to C-terminus: Putative transport protein ETA_21820 (562 aa).

5 helical membrane-spanning segments follow: residues 8-28 (LLIG…LCLG), 32-52 (LGSV…LLGQ), 66-86 (FMLF…SIFF), 94-114 (MLAI…GKLF), and 158-178 (HLSL…IFGA). RCK C-terminal domains follow at residues 202–288 (LDPD…SFRN) and 290–373 (KEVF…RIGF). 6 consecutive transmembrane segments (helical) span residues 383 to 403 (LLAF…TFQF), 406 to 426 (FNFG…LGFL), 440 to 460 (ALTM…GLSA), 473 to 493 (LLML…CFLF), 503 to 523 (ALLF…EIIS), and 540 to 560 (AIAN…WPIL).

Belongs to the AAE transporter (TC 2.A.81) family. YbjL subfamily.

Its subcellular location is the cell membrane. The protein is Putative transport protein ETA_21820 of Erwinia tasmaniensis (strain DSM 17950 / CFBP 7177 / CIP 109463 / NCPPB 4357 / Et1/99).